The following is a 79-amino-acid chain: Small ribosomal subunit protein bS16 (79 aa).

Belongs to the bacterial ribosomal protein bS16 family.

The polypeptide is Small ribosomal subunit protein bS16 (Marinobacter nauticus (strain ATCC 700491 / DSM 11845 / VT8) (Marinobacter aquaeolei)).